Here is a 524-residue protein sequence, read N- to C-terminus: Bifunctional purine biosynthesis protein PurH (524 aa).

The region spanning 1-149 (MSDPLIKRAL…KNNESVTVLT (149 aa)) is the MGS-like domain.

It belongs to the PurH family.

It carries out the reaction (6R)-10-formyltetrahydrofolate + 5-amino-1-(5-phospho-beta-D-ribosyl)imidazole-4-carboxamide = 5-formamido-1-(5-phospho-D-ribosyl)imidazole-4-carboxamide + (6S)-5,6,7,8-tetrahydrofolate. The enzyme catalyses IMP + H2O = 5-formamido-1-(5-phospho-D-ribosyl)imidazole-4-carboxamide. It participates in purine metabolism; IMP biosynthesis via de novo pathway; 5-formamido-1-(5-phospho-D-ribosyl)imidazole-4-carboxamide from 5-amino-1-(5-phospho-D-ribosyl)imidazole-4-carboxamide (10-formyl THF route): step 1/1. The protein operates within purine metabolism; IMP biosynthesis via de novo pathway; IMP from 5-formamido-1-(5-phospho-D-ribosyl)imidazole-4-carboxamide: step 1/1. The chain is Bifunctional purine biosynthesis protein PurH from Chlorobium phaeovibrioides (strain DSM 265 / 1930) (Prosthecochloris vibrioformis (strain DSM 265)).